We begin with the raw amino-acid sequence, 205 residues long: MTDEQTPAEDVAFEADDASQEIEALKLEVAALKDQALRYAAEAENTKRRAERESNDARAYAIQKFARDLLGAADNLSRATAMSPRDSQDPAVTNYIIGVEMTEKELQGAFERNGLKKIDPAKGEKFDPHLHQAVMEQPSTEVAAGGVLQVLQAGYELMGRLVRPAMVAVAAKGSTGPGAPAEPAAAPNPYASNGADTGGSFDTKA.

The segment at 172 to 205 (KGSTGPGAPAEPAAAPNPYASNGADTGGSFDTKA) is disordered. Low complexity predominate over residues 177–195 (PGAPAEPAAAPNPYASNGA).

Belongs to the GrpE family. As to quaternary structure, homodimer.

The protein localises to the cytoplasm. Functionally, participates actively in the response to hyperosmotic and heat shock by preventing the aggregation of stress-denatured proteins, in association with DnaK and GrpE. It is the nucleotide exchange factor for DnaK and may function as a thermosensor. Unfolded proteins bind initially to DnaJ; upon interaction with the DnaJ-bound protein, DnaK hydrolyzes its bound ATP, resulting in the formation of a stable complex. GrpE releases ADP from DnaK; ATP binding to DnaK triggers the release of the substrate protein, thus completing the reaction cycle. Several rounds of ATP-dependent interactions between DnaJ, DnaK and GrpE are required for fully efficient folding. The chain is Protein GrpE from Caulobacter sp. (strain K31).